The chain runs to 337 residues: tRNA(Ile)-lysidine synthase (337 aa).

40–45 (SGGQDS) provides a ligand contact to ATP.

This sequence belongs to the tRNA(Ile)-lysidine synthase family.

Its subcellular location is the cytoplasm. It carries out the reaction cytidine(34) in tRNA(Ile2) + L-lysine + ATP = lysidine(34) in tRNA(Ile2) + AMP + diphosphate + H(+). In terms of biological role, ligates lysine onto the cytidine present at position 34 of the AUA codon-specific tRNA(Ile) that contains the anticodon CAU, in an ATP-dependent manner. Cytidine is converted to lysidine, thus changing the amino acid specificity of the tRNA from methionine to isoleucine. This Parasynechococcus marenigrum (strain WH8102) protein is tRNA(Ile)-lysidine synthase.